The following is a 324-amino-acid chain: Stomatin-like protein stl-1 (324 aa).

It belongs to the band 7/mec-2 family. Widely expressed in most tissues, including body wall muscles, intestinal epithelia, and pharynx and head neurons.

It is found in the mitochondrion. In terms of biological role, mitochondrial protein that probably regulates the biogenesis and the activity of mitochondria. In neurons, involved in mitochondrial fusion and recovery of normal locomotory behavior during reoxygenation; probably acts independently of egl-9 and the canonical hypoxia response pathway. The protein is Stomatin-like protein stl-1 of Caenorhabditis elegans.